A 156-amino-acid chain; its full sequence is Endogenous retrovirus group K member 7 Pro protein (156 aa).

In terms of domain architecture, Peptidase A2 spans 21–96; that stretch reads FEGLVDTGAD…IPLNLWGRDL (76 aa). Asp26 is an active-site residue. A G-patch domain is found at 111–156; sequence YSPTSQKIMTKMGYIPGKGLGKNEDGIKVPVEAKINQEREGIGYPF.

Belongs to the peptidase A2 family. HERV class-II K(HML-2) subfamily. As to quaternary structure, active as a homodimer. Post-translationally, autoproteolytically processed at the N-terminus. Expected C-terminal autoprocessing not detected. The sequence shown is that of the processed Pro protein.

It carries out the reaction Processing at the authentic HIV-1 PR recognition site and release of the mature p17 matrix and the p24 capsid protein, as a result of the cleavage of the -SQNY-|-PIVQ- cleavage site.. In terms of biological role, retroviral proteases have roles in processing of the primary translation products and the maturation of the viral particle. Endogenous Pro proteins may have kept, lost or modified their original function during evolution. This endogenous protein has retained most of the characteristics of retroviral proteases. This Homo sapiens (Human) protein is Endogenous retrovirus group K member 7 Pro protein (ERVK-7).